The following is a 274-amino-acid chain: Thiamine kinase (274 aa).

It belongs to the thiamine kinase family.

It catalyses the reaction thiamine + ATP = thiamine phosphate + ADP + H(+). The protein operates within cofactor biosynthesis; thiamine diphosphate biosynthesis; thiamine phosphate from thiamine: step 1/1. Catalyzes the ATP-dependent phosphorylation of thiamine to thiamine phosphate. Is involved in thiamine salvage. The protein is Thiamine kinase of Salmonella dublin (strain CT_02021853).